The following is a 491-amino-acid chain: Probable allantoate deiminase (491 aa).

An N-terminal signal peptide occupies residues 1-32; that stretch reads MALLLSYPRRHPSIHLLILSAYALFLLPILDG. Asn-109 carries N-linked (GlcNAc...) asparagine glycosylation. Residues His-120, Asp-131, Glu-168, and His-234 each contribute to the Mn(2+) site. N-linked (GlcNAc...) asparagine glycosylation is found at Asn-265 and Asn-343. Position 454 (His-454) interacts with Mn(2+).

It belongs to the peptidase M20A family. As to quaternary structure, homodimer. The cofactor is Mn(2+).

It localises to the endoplasmic reticulum. It carries out the reaction allantoate + H2O + 2 H(+) = (S)-2-ureidoglycine + NH4(+) + CO2. Involved in the catabolism of purine nucleotides. The sequential activity of AAH, UGLYAH and UAH allows a complete purine breakdown without the intermediate generation of urea. This Oryza sativa subsp. japonica (Rice) protein is Probable allantoate deiminase.